We begin with the raw amino-acid sequence, 70 residues long: DNA-directed RNA polymerase subunit omega (70 aa).

This sequence belongs to the RNA polymerase subunit omega family. As to quaternary structure, the RNAP catalytic core consists of 2 alpha, 1 beta, 1 beta' and 1 omega subunit. When a sigma factor is associated with the core the holoenzyme is formed, which can initiate transcription.

The enzyme catalyses RNA(n) + a ribonucleoside 5'-triphosphate = RNA(n+1) + diphosphate. Its function is as follows. Promotes RNA polymerase assembly. Latches the N- and C-terminal regions of the beta' subunit thereby facilitating its interaction with the beta and alpha subunits. This is DNA-directed RNA polymerase subunit omega from Marinobacter nauticus (strain ATCC 700491 / DSM 11845 / VT8) (Marinobacter aquaeolei).